A 133-amino-acid polypeptide reads, in one-letter code: ATP synthase epsilon chain, chloroplastic (133 aa).

It belongs to the ATPase epsilon chain family. In terms of assembly, F-type ATPases have 2 components, CF(1) - the catalytic core - and CF(0) - the membrane proton channel. CF(1) has five subunits: alpha(3), beta(3), gamma(1), delta(1), epsilon(1). CF(0) has three main subunits: a, b and c.

It is found in the plastid. The protein localises to the chloroplast thylakoid membrane. In terms of biological role, produces ATP from ADP in the presence of a proton gradient across the membrane. The protein is ATP synthase epsilon chain, chloroplastic of Ipomoea batatas (Sweet potato).